A 295-amino-acid chain; its full sequence is Myosin light chain kinase A (295 aa).

One can recognise a Protein kinase domain in the interval 8-265 (YEFKEELGRG…ATNALNHPWL (258 aa)). ATP is bound by residues 14-22 (LGRGAFSIV) and Lys-37. The Proton acceptor role is filled by Asp-130. Phosphothreonine occurs at positions 166 and 289. Residues 264-295 (WLKSNNSNNTIDTVKMKEYIVERQKTQTKLVN) form an autoinhibitory domain region.

The protein belongs to the protein kinase superfamily. CAMK Ser/Thr protein kinase family. CaMK subfamily. Autophosphorylated. Transiently phosphorylated on Thr-166 and Thr-289. This phosphorylation is gbpC-dependent.

The catalysed reaction is L-seryl-[myosin light chain] + ATP = O-phospho-L-seryl-[myosin light chain] + ADP + H(+). It catalyses the reaction L-threonyl-[myosin light chain] + ATP = O-phospho-L-threonyl-[myosin light chain] + ADP + H(+). With respect to regulation, possesses an autoinhibitory domain. Autophosphorylation appears to increase the enzymatic activity. Activation is gbdC-dependent. Does not have a calmodulin-binding domain. Its function is as follows. Phosphorylates a specific serine in the N-terminus of a myosin light chain. Phosphorylates regulatory myosin light chain (mlcR) during chemotaxis. mlcR phosphorylation increases the motility and actin-activated ATPase activity of myosin, contributing to chemotaxis. This chain is Myosin light chain kinase A (mlkA), found in Dictyostelium discoideum (Social amoeba).